The following is a 449-amino-acid chain: Glucose-6-phosphate isomerase (449 aa).

Glutamate 291 acts as the Proton donor in catalysis. Catalysis depends on residues histidine 312 and lysine 426.

Belongs to the GPI family.

It is found in the cytoplasm. It catalyses the reaction alpha-D-glucose 6-phosphate = beta-D-fructose 6-phosphate. The protein operates within carbohydrate biosynthesis; gluconeogenesis. It participates in carbohydrate degradation; glycolysis; D-glyceraldehyde 3-phosphate and glycerone phosphate from D-glucose: step 2/4. In terms of biological role, catalyzes the reversible isomerization of glucose-6-phosphate to fructose-6-phosphate. The sequence is that of Glucose-6-phosphate isomerase from Streptococcus pyogenes serotype M6 (strain ATCC BAA-946 / MGAS10394).